We begin with the raw amino-acid sequence, 60 residues long: Large ribosomal subunit protein bL32 (60 aa).

Residues 1 to 60 form a disordered region; the sequence is MAVQQNKKSPSKRGMHRSHDFLVNPPTAIEPTTGESHLRHHISPNGFYRGRKILKTKADE. A compositionally biased stretch (basic residues) spans 49 to 60; that stretch reads RGRKILKTKADE.

It belongs to the bacterial ribosomal protein bL32 family.

The sequence is that of Large ribosomal subunit protein bL32 from Bordetella avium (strain 197N).